The primary structure comprises 873 residues: Alanine--tRNA ligase (873 aa).

4 residues coordinate Zn(2+): H562, H566, C666, and H670.

This sequence belongs to the class-II aminoacyl-tRNA synthetase family. It depends on Zn(2+) as a cofactor.

It localises to the cytoplasm. It carries out the reaction tRNA(Ala) + L-alanine + ATP = L-alanyl-tRNA(Ala) + AMP + diphosphate. Functionally, catalyzes the attachment of alanine to tRNA(Ala) in a two-step reaction: alanine is first activated by ATP to form Ala-AMP and then transferred to the acceptor end of tRNA(Ala). Also edits incorrectly charged Ser-tRNA(Ala) and Gly-tRNA(Ala) via its editing domain. The chain is Alanine--tRNA ligase from Dichelobacter nodosus (strain VCS1703A).